A 497-amino-acid polypeptide reads, in one-letter code: Probable D-lactate dehydrogenase, mitochondrial (497 aa).

Residues 65-246 (HRCRPPDVVV…TKATLRLYGV (182 aa)) enclose the FAD-binding PCMH-type domain.

This sequence belongs to the FAD-binding oxidoreductase/transferase type 4 family. The cofactor is FAD.

It localises to the mitochondrion. It carries out the reaction (R)-lactate + 2 Fe(III)-[cytochrome c] = 2 Fe(II)-[cytochrome c] + pyruvate + 2 H(+). In terms of biological role, involved in D-lactate, but not L-lactate catabolic process. The polypeptide is Probable D-lactate dehydrogenase, mitochondrial (ldhd) (Danio rerio (Zebrafish)).